Consider the following 353-residue polypeptide: Rhodopsin (353 aa).

Residues 1–36 (MNGTEGPYFYIPMLNTTGIVRSPYEYPQYYLVNPAA) lie on the Extracellular side of the membrane. Asn2 and Asn15 each carry an N-linked (GlcNAc...) asparagine glycan. A helical membrane pass occupies residues 37-61 (YAALCAYMFLLILLGFPINFLTLYV). The Cytoplasmic portion of the chain corresponds to 62 to 73 (TIEHKKLRTPLN). A helical membrane pass occupies residues 74 to 96 (YILLNLAVANLFMVFGGFTTTMY). Over 97–110 (TSMHGYFVLGRLGC) the chain is Extracellular. Cys110 and Cys187 are disulfide-bonded. A helical transmembrane segment spans residues 111–133 (NLEGFFATLGGEIGLWSLVVLAV). The 'Ionic lock' involved in activated form stabilization signature appears at 134-136 (ERW). The Cytoplasmic portion of the chain corresponds to 134-152 (ERWMVVCKPISNFRFTENH). Residues 153–173 (AIMGLGFTWFAASACAVPPLV) form a helical membrane-spanning segment. Topologically, residues 174-202 (GWSRYIPEGMQCSCGVDYYTRAEGFNNES) are extracellular. N-linked (GlcNAc...) asparagine glycosylation is present at Asn200. Residues 203–224 (FVVYMFVCHFLIPLIVVFFCYG) form a helical membrane-spanning segment. The Cytoplasmic segment spans residues 225–252 (RLLCAVKEAAAAQQESETTQRAEREVTR). A helical transmembrane segment spans residues 253–274 (MVVIMVIAFLICWCPYAGVAWY). Over 275–286 (IFSNQGSEFGPL) the chain is Extracellular. A helical membrane pass occupies residues 287–308 (FMTIPAFFAKSSSIYNPLIYIF). Position 296 is an N6-(retinylidene)lysine (Lys296). Residues 309-353 (MNKQFRHCMITTLCCGKNPFEEEEGSTTTSKTEASSASSSSVSPA) are Cytoplasmic-facing. 2 S-palmitoyl cysteine lipidation sites follow: Cys322 and Cys323. The disordered stretch occupies residues 329 to 353 (EEEEGSTTTSKTEASSASSSSVSPA). The span at 334-353 (STTTSKTEASSASSSSVSPA) shows a compositional bias: low complexity.

Belongs to the G-protein coupled receptor 1 family. Opsin subfamily. In terms of processing, phosphorylated on some or all of the serine and threonine residues present in the C-terminal region. Contains one covalently linked retinal chromophore.

The protein resides in the membrane. Its subcellular location is the cell projection. The protein localises to the cilium. It localises to the photoreceptor outer segment. Functionally, photoreceptor required for image-forming vision at low light intensity. While most salt water fish species use retinal as chromophore, most freshwater fish use 3-dehydroretinal, or a mixture of retinal and 3-dehydroretinal. Light-induced isomerization of 11-cis to all-trans retinal triggers a conformational change that activates signaling via G-proteins. Subsequent receptor phosphorylation mediates displacement of the bound G-protein alpha subunit by arrestin and terminates signaling. The polypeptide is Rhodopsin (rho) (Solea solea (Common sole)).